The chain runs to 79 residues: Dolichyl-diphosphooligosaccharide--protein glycosyltransferase subunit TMEM258 (79 aa).

Position 1 is an N-acetylmethionine (Met-1). At 1–16 (MELEAMSRYTSPVNPA) the chain is on the lumenal side. A helical transmembrane segment spans residues 17-37 (VFPHLTVVLLAIGMFFTAWFF). Residues 38 to 54 (VYEVTSTKYTRDICKEL) are Cytoplasmic-facing. The chain crosses the membrane as a helical span at residues 55-75 (LISLVASLFMGFGVLFLLLWV). Residues 76–79 (GIYV) lie on the Lumenal side of the membrane.

It belongs to the OST5 family. In terms of assembly, component of the oligosaccharyltransferase (OST) complex. OST exists in two different complex forms which contain common core subunits RPN1, RPN2, OST48, OST4, DAD1 and TMEM258, either STT3A or STT3B as catalytic subunits, and form-specific accessory subunits. STT3A complex assembly occurs through the formation of 3 subcomplexes. Subcomplex 1 contains RPN1 and TMEM258, subcomplex 2 contains the STT3A-specific subunits STT3A, DC2/OSTC, and KCP2 as well as the core subunit OST4, and subcomplex 3 contains RPN2, DAD1, and OST48. The STT3A complex can form stable complexes with the Sec61 complex or with both the Sec61 and TRAP complexes.

It is found in the membrane. Its subcellular location is the endoplasmic reticulum. The protein localises to the cytoplasm. It functions in the pathway protein modification; protein glycosylation. Its function is as follows. Subunit of the oligosaccharyl transferase (OST) complex that catalyzes the initial transfer of a defined glycan (Glc(3)Man(9)GlcNAc(2) in eukaryotes) from the lipid carrier dolichol-pyrophosphate to an asparagine residue within an Asn-X-Ser/Thr consensus motif in nascent polypeptide chains, the first step in protein N-glycosylation. N-glycosylation occurs cotranslationally and the complex associates with the Sec61 complex at the channel-forming translocon complex that mediates protein translocation across the endoplasmic reticulum (ER). All subunits are required for a maximal enzyme activity. The polypeptide is Dolichyl-diphosphooligosaccharide--protein glycosyltransferase subunit TMEM258 (Canis lupus familiaris (Dog)).